A 101-amino-acid polypeptide reads, in one-letter code: Movement protein (101 aa).

Positions 1 to 22 are disordered; it reads MDPQNSFLLQPRVPTAAPTSGG. The helical transmembrane segment at 30 to 50 threads the bilayer; the sequence is EVAILSFVGLICFYLLYLWVL. Residues 79–101 are disordered; it reads NPIPNTQAPPSQGNPGPFVPGTG. Over residues 80 to 92 the composition is skewed to polar residues; the sequence is PIPNTQAPPSQGN.

This sequence belongs to the mastrevirus movement protein family. As to quaternary structure, interacts with the capsid protein (CP). Part of a MP-CP-viral DNA complex.

The protein localises to the host membrane. In terms of biological role, involved in the viral transport within, and between cells. The protein is Movement protein of Avena sativa (Oat).